The chain runs to 1888 residues: Protein mms22 (1888 aa).

Disordered regions lie at residues 12 to 34 (DSQD…RGNE), 151 to 258 (FSSD…ISSN), and 316 to 354 (RRKL…SRFD). Polar residues-rich tracts occupy residues 13–32 (SQDS…SQRG), 212–227 (SNLN…SSTI), and 338–348 (SDNSISTPTPT).

This sequence belongs to the MMS22 family.

It localises to the nucleus. Functionally, involved in protection against replication-dependent DNA damage. May act by restoring active replication forks, repairing unusual DNA structures, and/or preventing aberrant DNA rearrangement at arrested replication forks. This is Protein mms22 (mus7) from Schizosaccharomyces pombe (strain 972 / ATCC 24843) (Fission yeast).